The sequence spans 328 residues: Glycerol-3-phosphate dehydrogenase [NAD(P)+] (328 aa).

Positions 15, 35, and 108 each coordinate NADPH. Residues lysine 108, glycine 136, and serine 138 each coordinate sn-glycerol 3-phosphate. Alanine 140 provides a ligand contact to NADPH. Sn-glycerol 3-phosphate contacts are provided by lysine 191, aspartate 244, serine 254, arginine 255, and asparagine 256. Catalysis depends on lysine 191, which acts as the Proton acceptor. Arginine 255 provides a ligand contact to NADPH. The NADPH site is built by leucine 275 and glutamate 277.

Belongs to the NAD-dependent glycerol-3-phosphate dehydrogenase family.

It localises to the cytoplasm. It catalyses the reaction sn-glycerol 3-phosphate + NAD(+) = dihydroxyacetone phosphate + NADH + H(+). The catalysed reaction is sn-glycerol 3-phosphate + NADP(+) = dihydroxyacetone phosphate + NADPH + H(+). It functions in the pathway membrane lipid metabolism; glycerophospholipid metabolism. Functionally, catalyzes the reduction of the glycolytic intermediate dihydroxyacetone phosphate (DHAP) to sn-glycerol 3-phosphate (G3P), the key precursor for phospholipid synthesis. In Azorhizobium caulinodans (strain ATCC 43989 / DSM 5975 / JCM 20966 / LMG 6465 / NBRC 14845 / NCIMB 13405 / ORS 571), this protein is Glycerol-3-phosphate dehydrogenase [NAD(P)+].